The chain runs to 635 residues: Biosynthetic arginine decarboxylase (635 aa).

Lys-100 carries the post-translational modification N6-(pyridoxal phosphate)lysine. 282–292 (VDIGGGLGVDY) provides a ligand contact to substrate.

This sequence belongs to the Orn/Lys/Arg decarboxylase class-II family. SpeA subfamily. Requires Mg(2+) as cofactor. Pyridoxal 5'-phosphate is required as a cofactor.

The catalysed reaction is L-arginine + H(+) = agmatine + CO2. It participates in amine and polyamine biosynthesis; agmatine biosynthesis; agmatine from L-arginine: step 1/1. Functionally, catalyzes the biosynthesis of agmatine from arginine. The protein is Biosynthetic arginine decarboxylase of Geobacter sulfurreducens (strain ATCC 51573 / DSM 12127 / PCA).